The following is a 39-amino-acid chain: Photosystem II reaction center protein L (39 aa).

A helical transmembrane segment spans residues 18–38 (SLYLGLLFVFVTGVLMSSYFF).

This sequence belongs to the PsbL family. As to quaternary structure, PSII is composed of 1 copy each of membrane proteins PsbA, PsbB, PsbC, PsbD, PsbE, PsbF, PsbH, PsbI, PsbJ, PsbK, PsbL, PsbM, PsbT, PsbX, PsbY, PsbZ, Psb30/Ycf12, peripheral proteins PsbO, CyanoQ (PsbQ), PsbU, PsbV and a large number of cofactors. It forms dimeric complexes.

The protein resides in the cellular thylakoid membrane. In terms of biological role, one of the components of the core complex of photosystem II (PSII). PSII is a light-driven water:plastoquinone oxidoreductase that uses light energy to abstract electrons from H(2)O, generating O(2) and a proton gradient subsequently used for ATP formation. It consists of a core antenna complex that captures photons, and an electron transfer chain that converts photonic excitation into a charge separation. This subunit is found at the monomer-monomer interface and is required for correct PSII assembly and/or dimerization. This chain is Photosystem II reaction center protein L, found in Synechococcus sp. (strain CC9605).